The primary structure comprises 299 residues: HTH-type transcriptional regulator CysL (299 aa).

In terms of domain architecture, HTH lysR-type spans 1-58 (MYYDVLKTFIAVVEEKNFTKAAEKLMISQPSVSLHIKNLEKEFQTALLNRSPKHFTTT). Residues 18-37 (FTKAAEKLMISQPSVSLHIK) constitute a DNA-binding region (H-T-H motif).

It belongs to the LysR transcriptional regulatory family.

Transcriptional activator of the cysJI operon which is involved in sulfur assimilation. Also negatively regulates its own transcription. This Bacillus subtilis (strain 168) protein is HTH-type transcriptional regulator CysL (cysL).